The chain runs to 132 residues: MAKEYSRTQRIGDQMQRELAELIRREVKDPRVGLVTITAVDVSRDLGHAKVFITVMGEETPDAVQQSLKALNSAASFLRLHLGRSMQLRSVPQLHFHFDESVSRGVHLSALIERAVAEDRLHKDTDEQDTKE.

This sequence belongs to the RbfA family. As to quaternary structure, monomer. Binds 30S ribosomal subunits, but not 50S ribosomal subunits or 70S ribosomes.

Its subcellular location is the cytoplasm. Its function is as follows. One of several proteins that assist in the late maturation steps of the functional core of the 30S ribosomal subunit. Associates with free 30S ribosomal subunits (but not with 30S subunits that are part of 70S ribosomes or polysomes). Required for efficient processing of 16S rRNA. May interact with the 5'-terminal helix region of 16S rRNA. The protein is Ribosome-binding factor A of Pseudomonas putida (strain W619).